Here is an 880-residue protein sequence, read N- to C-terminus: Alanine--tRNA ligase (880 aa).

Zn(2+) contacts are provided by His-567, His-571, Cys-669, and His-673.

The protein belongs to the class-II aminoacyl-tRNA synthetase family. Zn(2+) is required as a cofactor.

It is found in the cytoplasm. The enzyme catalyses tRNA(Ala) + L-alanine + ATP = L-alanyl-tRNA(Ala) + AMP + diphosphate. Catalyzes the attachment of alanine to tRNA(Ala) in a two-step reaction: alanine is first activated by ATP to form Ala-AMP and then transferred to the acceptor end of tRNA(Ala). Also edits incorrectly charged Ser-tRNA(Ala) and Gly-tRNA(Ala) via its editing domain. The sequence is that of Alanine--tRNA ligase from Bacillus cereus (strain ZK / E33L).